Consider the following 161-residue polypeptide: Allophycocyanin beta chain (161 aa).

Position 71 is an N4-methylasparagine (asparagine 71). Residue cysteine 81 participates in (2R,3E)-phycocyanobilin binding.

This sequence belongs to the phycobiliprotein family. As to quaternary structure, heterodimer of an alpha and a beta chain. In terms of processing, contains one covalently linked phycocyanobilin chromophore.

The protein resides in the cellular thylakoid membrane. Functionally, light-harvesting photosynthetic bile pigment-protein from the phycobiliprotein complex. Allophycocyanin has a maximum absorption at approximately 650 nanometers. This Arthrospira platensis (Spirulina platensis) protein is Allophycocyanin beta chain (apcB).